A 159-amino-acid polypeptide reads, in one-letter code: uncharacterized protein (159 aa).

Residues 4 to 24 (QIALILSLIILIFFIYKFAMF) traverse the membrane as a helical segment.

It is found in the membrane. This is an uncharacterized protein from Acheta domesticus (House cricket).